Consider the following 365-residue polypeptide: Phosphate acyltransferase (365 aa).

Belongs to the PlsX family. Homodimer. Probably interacts with PlsY.

It localises to the cytoplasm. The enzyme catalyses a fatty acyl-[ACP] + phosphate = an acyl phosphate + holo-[ACP]. The protein operates within lipid metabolism; phospholipid metabolism. Catalyzes the reversible formation of acyl-phosphate (acyl-PO(4)) from acyl-[acyl-carrier-protein] (acyl-ACP). This enzyme utilizes acyl-ACP as fatty acyl donor, but not acyl-CoA. In Klebsiella pneumoniae (strain 342), this protein is Phosphate acyltransferase.